Consider the following 71-residue polypeptide: Biotinylated protein TB7.3 homolog (71 aa).

The region spanning 2–71 is the Biotinyl-binding domain; sequence AEDVRAEIVA…QAGHLIAVID (70 aa). Lys-37 bears the N6-biotinyllysine mark.

The protein is Biotinylated protein TB7.3 homolog of Mycolicibacterium smegmatis (strain ATCC 700084 / mc(2)155) (Mycobacterium smegmatis).